Here is a 512-residue protein sequence, read N- to C-terminus: MSKKPVMLMILDGFGIAPKSEGNAVTLAKKPNLDKLFEKYPTSQLQASGLAVGLPEGQMGNSEVGHLNIGSGRIVYQELTRITKAIADGDFFENESLKLAMTNAKKTGSSLHLMGLLSDGGVHSHIEHLRGLLEFAKKEEVQNVYVHAFMDGRDVPPSSGQEFIEKTEKMMAEVGVGKIATVSGRYYAMDRDNRWERVELAYNALVLGKGETASSATQAIEKSYHDNKTDEFVLPTVVTENGNPTANIKNGDSVIFFNFRPDRAREITRAINDKEFAGFKRETLDLTFVTMTQYDKTLERVNVAYTPQTLSNTLGEYVSNKGLNQLRIAETEKYAHVTFFFNGGVEKENPGEDRKVIPSPKVATYDLKPEMSAYEVTDELLNRLDSDKYDMVILNFANPDMVGHTGVVEAAVKAIETVDECVGKIADKILEKNGCLFITADHGNAETMIDFSTGNPYTAHTTHEVPFVWVANDTEGKKLSNGKLADIAPTMLVQLGLEVPTEMTGENLIVNK.

The Mn(2+) site is built by D12 and S62. The Phosphoserine intermediate role is filled by S62. Substrate-binding positions include H123, 153–154 (RD), R185, R191, 260–263 (RPDR), and K333. Mn(2+) is bound by residues D400, H404, D441, H442, and H460.

The protein belongs to the BPG-independent phosphoglycerate mutase family. Monomer. Mn(2+) serves as cofactor.

The catalysed reaction is (2R)-2-phosphoglycerate = (2R)-3-phosphoglycerate. It participates in carbohydrate degradation; glycolysis; pyruvate from D-glyceraldehyde 3-phosphate: step 3/5. Its function is as follows. Catalyzes the interconversion of 2-phosphoglycerate and 3-phosphoglycerate. This chain is 2,3-bisphosphoglycerate-independent phosphoglycerate mutase, found in Clostridium beijerinckii (strain ATCC 51743 / NCIMB 8052) (Clostridium acetobutylicum).